We begin with the raw amino-acid sequence, 320 residues long: Polynucleotide 5'-triphosphatase CTL1 (320 aa).

The segment covering 1–12 has biased composition (polar residues); the sequence is MSDQPETPSNSR. A disordered region spans residues 1–23; that stretch reads MSDQPETPSNSRNSHENVGAKKA. Positions 13-23 are enriched in basic and acidic residues; sequence NSHENVGAKKA.

This sequence belongs to the fungal TPase family. Requires Mg(2+) as cofactor. It depends on Mn(2+) as a cofactor.

Its subcellular location is the cytoplasm. It is found in the nucleus. It catalyses the reaction a 5'-end triphospho-ribonucleoside in mRNA + H2O = a 5'-end diphospho-ribonucleoside in mRNA + phosphate + H(+). Its function is as follows. Probably involved in an RNA processing event other than mRNA capping. Releases gamma-phosphate from the 5'-end of RNA to produce a diphosphate terminus. The polypeptide is Polynucleotide 5'-triphosphatase CTL1 (Saccharomyces cerevisiae (strain ATCC 204508 / S288c) (Baker's yeast)).